A 254-amino-acid chain; its full sequence is L-erythrulose-1-phosphate isomerase (254 aa).

H97 acts as the Electrophile in catalysis. Catalysis depends on E170, which acts as the Proton acceptor. Positions 176 and 213 each coordinate substrate.

It belongs to the triosephosphate isomerase family. In terms of assembly, homodimer.

It localises to the cytoplasm. The catalysed reaction is L-erythrulose 1-phosphate = D-erythrulose 4-phosphate. It functions in the pathway carbohydrate metabolism; erythritol degradation. Functionally, catalyzes the isomerization of D-erythrulose-4P to L-erythrulose-1P. This chain is L-erythrulose-1-phosphate isomerase, found in Mesorhizobium japonicum (strain LMG 29417 / CECT 9101 / MAFF 303099) (Mesorhizobium loti (strain MAFF 303099)).